A 337-amino-acid polypeptide reads, in one-letter code: ATP-dependent (S)-NAD(P)H-hydrate dehydratase (337 aa).

Ser-6 bears the Phosphoserine mark. Residues 11-335 (IKLAQKRCIP…DRVGEVFAKL (325 aa)) enclose the YjeF C-terminal domain. (6S)-NADPHX-binding positions include Gly-121 and 182-188 (NVVEFKR). Residues 218–222 (KGQSD) and 240–249 (GSNKRVGGQG) each bind ATP. The disordered stretch occupies residues 224–246 (IFSPDSEKDMLTNSEEGSNKRVG). Asp-250 lines the (6S)-NADPHX pocket.

It belongs to the NnrD/CARKD family. It depends on Mg(2+) as a cofactor.

Its subcellular location is the cytoplasm. The catalysed reaction is (6S)-NADHX + ATP = ADP + phosphate + NADH + H(+). The enzyme catalyses (6S)-NADPHX + ATP = ADP + phosphate + NADPH + H(+). Functionally, catalyzes the dehydration of the S-form of NAD(P)HX at the expense of ATP, which is converted to ADP. Together with NAD(P)HX epimerase, which catalyzes the epimerization of the S- and R-forms, the enzyme allows the repair of both epimers of NAD(P)HX, a damaged form of NAD(P)H that is a result of enzymatic or heat-dependent hydration. The sequence is that of ATP-dependent (S)-NAD(P)H-hydrate dehydratase from Saccharomyces cerevisiae (strain ATCC 204508 / S288c) (Baker's yeast).